The following is an 87-amino-acid chain: Retinal rod rhodopsin-sensitive cGMP 3',5'-cyclic phosphodiesterase subunit gamma (87 aa).

Met1 is modified (N-acetylmethionine). A compositionally biased stretch (basic and acidic residues) spans 1 to 12 (MNLEPPKAEIRS). The interval 1–55 (MNLEPPKAEIRSATRVMGGPVTPRKGPPKFKQRQTRQFKSKPPKKGVQGFGDDIP) is disordered. Residues 26-44 (GPPKFKQRQTRQFKSKPPK) show a composition bias toward basic residues.

It belongs to the rod/cone cGMP-PDE gamma subunit family. Oligomer composed of two catalytic chains (alpha and beta), an inhibitory chain (gamma) and the delta chain.

It carries out the reaction 3',5'-cyclic GMP + H2O = GMP + H(+). In terms of biological role, participates in processes of transmission and amplification of the visual signal. cGMP-PDEs are the effector molecules in G-protein-mediated phototransduction in vertebrate rods and cones. This chain is Retinal rod rhodopsin-sensitive cGMP 3',5'-cyclic phosphodiesterase subunit gamma (PDE6G), found in Bos taurus (Bovine).